The following is a 197-amino-acid chain: Imidazoleglycerol-phosphate dehydratase (197 aa).

This sequence belongs to the imidazoleglycerol-phosphate dehydratase family.

Its subcellular location is the cytoplasm. The enzyme catalyses D-erythro-1-(imidazol-4-yl)glycerol 3-phosphate = 3-(imidazol-4-yl)-2-oxopropyl phosphate + H2O. Its pathway is amino-acid biosynthesis; L-histidine biosynthesis; L-histidine from 5-phospho-alpha-D-ribose 1-diphosphate: step 6/9. In Streptomyces coelicolor (strain ATCC BAA-471 / A3(2) / M145), this protein is Imidazoleglycerol-phosphate dehydratase (hisB).